The primary structure comprises 157 residues: Peptide methionine sulfoxide reductase MsrA (157 aa).

Cys-10 is an active-site residue.

This sequence belongs to the MsrA Met sulfoxide reductase family.

The catalysed reaction is L-methionyl-[protein] + [thioredoxin]-disulfide + H2O = L-methionyl-(S)-S-oxide-[protein] + [thioredoxin]-dithiol. It catalyses the reaction [thioredoxin]-disulfide + L-methionine + H2O = L-methionine (S)-S-oxide + [thioredoxin]-dithiol. Has an important function as a repair enzyme for proteins that have been inactivated by oxidation. Catalyzes the reversible oxidation-reduction of methionine sulfoxide in proteins to methionine. The polypeptide is Peptide methionine sulfoxide reductase MsrA (Clostridium botulinum (strain Kyoto / Type A2)).